The sequence spans 618 residues: UvrABC system protein C (618 aa).

The GIY-YIG domain occupies 13–92 (DKPGVYLMKN…IKKYRPKYNI (80 aa)). In terms of domain architecture, UVR spans 204–239 (LDIVENFKLNMEKAAENLEFEKAAMLRDKINIIEKI).

Belongs to the UvrC family. Interacts with UvrB in an incision complex.

Its subcellular location is the cytoplasm. Functionally, the UvrABC repair system catalyzes the recognition and processing of DNA lesions. UvrC both incises the 5' and 3' sides of the lesion. The N-terminal half is responsible for the 3' incision and the C-terminal half is responsible for the 5' incision. In Clostridium botulinum (strain Kyoto / Type A2), this protein is UvrABC system protein C.